The sequence spans 312 residues: Ribosomal RNA small subunit methyltransferase H (312 aa).

Residues 35–37, Asp55, Asp101, and Gln108 each bind S-adenosyl-L-methionine; that span reads GGH. A disordered region spans residues 285–306; it reads ALKPSEHEVTENSRSRSSVLRV. Basic and acidic residues predominate over residues 287–298; it reads KPSEHEVTENSR.

The protein belongs to the methyltransferase superfamily. RsmH family.

The protein resides in the cytoplasm. It catalyses the reaction cytidine(1402) in 16S rRNA + S-adenosyl-L-methionine = N(4)-methylcytidine(1402) in 16S rRNA + S-adenosyl-L-homocysteine + H(+). Specifically methylates the N4 position of cytidine in position 1402 (C1402) of 16S rRNA. In Aeromonas salmonicida (strain A449), this protein is Ribosomal RNA small subunit methyltransferase H.